Here is a 524-residue protein sequence, read N- to C-terminus: Glutamyl-tRNA(Gln) amidotransferase subunit A, mitochondrial (524 aa).

Active-site charge relay system residues include lysine 76 and serine 171. The Acyl-ester intermediate role is filled by serine 195.

It belongs to the amidase family. GatA subfamily. Subunit of the heterotrimeric GatCAB amidotransferase (AdT) complex, composed of A (qrsl1), B (gatb) and C (gatc) subunits.

It localises to the mitochondrion. The enzyme catalyses L-glutamyl-tRNA(Gln) + L-glutamine + ATP + H2O = L-glutaminyl-tRNA(Gln) + L-glutamate + ADP + phosphate + H(+). Allows the formation of correctly charged Gln-tRNA(Gln) through the transamidation of misacylated Glu-tRNA(Gln) in the mitochondria. The reaction takes place in the presence of glutamine and ATP through an activated gamma-phospho-Glu-tRNA(Gln). The polypeptide is Glutamyl-tRNA(Gln) amidotransferase subunit A, mitochondrial (qrsl1) (Xenopus laevis (African clawed frog)).